The sequence spans 269 residues: Hemin import ATP-binding protein HmuV (269 aa).

Positions 2–242 constitute an ABC transporter domain; that stretch reads LEVIHTGLNI…AMVEACFDLP (241 aa). Residue 34–41 participates in ATP binding; it reads GPNGAGKS.

Belongs to the ABC transporter superfamily. Heme (hemin) importer (TC 3.A.1.14.5) family. As to quaternary structure, the complex is composed of two ATP-binding proteins (HmuV), two transmembrane proteins (HmuU) and a solute-binding protein (HmuT).

It is found in the cell inner membrane. Part of the ABC transporter complex HmuTUV involved in hemin import. Responsible for energy coupling to the transport system. The protein is Hemin import ATP-binding protein HmuV of Methylobacillus flagellatus (strain ATCC 51484 / DSM 6875 / VKM B-1610 / KT).